The sequence spans 253 residues: Imidazole glycerol phosphate synthase subunit HisF (253 aa).

Residues aspartate 11 and aspartate 130 contribute to the active site.

Belongs to the HisA/HisF family. As to quaternary structure, heterodimer of HisH and HisF.

The protein localises to the cytoplasm. It catalyses the reaction 5-[(5-phospho-1-deoxy-D-ribulos-1-ylimino)methylamino]-1-(5-phospho-beta-D-ribosyl)imidazole-4-carboxamide + L-glutamine = D-erythro-1-(imidazol-4-yl)glycerol 3-phosphate + 5-amino-1-(5-phospho-beta-D-ribosyl)imidazole-4-carboxamide + L-glutamate + H(+). The protein operates within amino-acid biosynthesis; L-histidine biosynthesis; L-histidine from 5-phospho-alpha-D-ribose 1-diphosphate: step 5/9. IGPS catalyzes the conversion of PRFAR and glutamine to IGP, AICAR and glutamate. The HisF subunit catalyzes the cyclization activity that produces IGP and AICAR from PRFAR using the ammonia provided by the HisH subunit. This Dehalococcoides mccartyi (strain ATCC BAA-2266 / KCTC 15142 / 195) (Dehalococcoides ethenogenes (strain 195)) protein is Imidazole glycerol phosphate synthase subunit HisF.